A 195-amino-acid chain; its full sequence is MAGARRLELGEALALGSGWRHACHALLYAPDPGMLFGRIPLRYAILMQMRFDGRLGFPGGFVDTQDRSLEDGLNRELREELGEAAAAFRVERTDYRSSHVGSGPRVVAHFYAKRLTLEELLAVEAGATRAKDHGLEVLGLVRVPLYTLRDGVGGLPTFLENSFIGSAREQLLEALQDLGLLQSGSISGLKIPAHH.

Residues 18–173 enclose the Nudix hydrolase domain; it reads GWRHACHALL…IGSAREQLLE (156 aa). 3 residues coordinate substrate: H24, R50, and F57. Mn(2+)-binding residues include G59, E76, E80, and H99. Residues 61–82 carry the Nudix box motif; the sequence is FVDTQDRSLEDGLNRELREELG. Substrate is bound at residue Q170. E173 contacts Mn(2+).

This sequence belongs to the Nudix hydrolase family. NUDT16 subfamily. Homodimer. Mg(2+) serves as cofactor. Mn(2+) is required as a cofactor. The cofactor is Co(2+). As to expression, expressed strongly in lung, kidney, adrenal gland, testis, heart and brain.

It localises to the nucleus. The protein resides in the nucleoplasm. The protein localises to the nucleolus. Its subcellular location is the cytoplasm. The catalysed reaction is a 5'-end (N(7)-methyl 5'-triphosphoguanosine)-ribonucleoside in mRNA + H2O = N(7)-methyl-GDP + a 5'-end phospho-ribonucleoside in mRNA + 2 H(+). It catalyses the reaction IDP + H2O = IMP + phosphate + H(+). The enzyme catalyses dIDP + H2O = dIMP + phosphate + H(+). It carries out the reaction a 5'-end NAD(+)-phospho-ribonucleoside in mRNA + H2O = a 5'-end phospho-adenosine-phospho-ribonucleoside in mRNA + beta-nicotinamide D-ribonucleotide + 2 H(+). The catalysed reaction is a 5'-end FAD-phospho-ribonucleoside in mRNA + H2O = a 5'-end phospho-adenosine-phospho-ribonucleoside in mRNA + FMN + 2 H(+). It catalyses the reaction a 5'-end CoA-ribonucleoside in mRNA + H2O = a 5'-end phospho-adenosine-phospho-ribonucleoside in mRNA + (R)-4'-phosphopantetheine + 2 H(+). Its activity is regulated as follows. The phosphatase activity is inhibited by the product IMP. Functionally, RNA-binding and decapping enzyme that catalyzes the cleavage of the cap structure of snoRNAs and mRNAs in a metal-dependent manner. Part of the U8 snoRNP complex that is required for the accumulation of mature 5.8S and 28S rRNA. Has diphosphatase activity and removes m7G and/or m227G caps from U8 snoRNA and leaves a 5'monophosphate on the RNA. Also catalyzes the cleavage of the cap structure on mRNAs. Does not hydrolyze cap analog structures like 7-methylguanosine nucleoside triphosphate (m7GpppG). Also hydrolysis m7G- and m227G U3-capped RNAs but with less efficiencies. Has broad substrate specificity with manganese or cobalt as cofactor and can act on various RNA species. Binds to the U8 snoRNA; metal is not required for RNA-binding. May play a role in the regulation of snoRNAs and mRNAs degradation. Also acts as a phosphatase; hydrolyzes the non-canonical purine nucleotides inosine diphosphate (IDP) and deoxyinosine diphosphate (dITP) as well as guanosine diphosphate (GDP), deoxyguanosine diphosphate (dGDP), xanthine diphosphate (XDP), inosine triphosphate (ITP) and deoxyinosine triphosphate (ITP) to their respective monophosphate derivatives and does not distinguish between the deoxy- and ribose forms. The order of activity with different substrates is IDP &gt; dIDP &gt;&gt; GDP = dGDP &gt; XDP = ITP = dITP. Binds strongly to GTP, ITP and XTP. Participates in the hydrolysis of dIDP/IDP and probably excludes non-canonical purines from RNA and DNA precursor pools, thus preventing their incorporation into RNA and DNA and avoiding chromosomal lesions. Exhibits decapping activity towards NAD-capped RNAs and FAD-capped RNAs. Exhibits decapping activity towards dpCoA-capped RNAs in vitro. This Homo sapiens (Human) protein is U8 snoRNA-decapping enzyme (NUDT16).